The sequence spans 149 residues: UPF0260 protein PSPPH_1551 (149 aa).

Belongs to the UPF0260 family.

This is UPF0260 protein PSPPH_1551 from Pseudomonas savastanoi pv. phaseolicola (strain 1448A / Race 6) (Pseudomonas syringae pv. phaseolicola (strain 1448A / Race 6)).